We begin with the raw amino-acid sequence, 313 residues long: Adhesin MafA 1 (313 aa).

The first 14 residues, 1-14, serve as a signal peptide directing secretion; sequence MKILLLLIPLVLTA. Cys-15 carries the N-palmitoyl cysteine lipid modification. The S-diacylglycerol cysteine moiety is linked to residue Cys-15. Residues 282-298 are compositionally biased toward polar residues; sequence GDTTAQNRPDFKQNNGK. Positions 282-313 are disordered; sequence GDTTAQNRPDFKQNNGKNPDVGNEVIRRRKGG.

Belongs to the MafA family.

Its subcellular location is the cell outer membrane. This chain is Adhesin MafA 1 (mafA1), found in Neisseria meningitidis serogroup C / serotype 2a (strain ATCC 700532 / DSM 15464 / FAM18).